We begin with the raw amino-acid sequence, 215 residues long: Cytochrome b6 (215 aa).

Residues 32–52 (IFYCLGGITLTCFLVQVATGF) form a helical membrane-spanning segment. Cysteine 35 is a binding site for heme c. Histidine 86 and histidine 100 together coordinate heme b. 3 helical membrane passes run 90–110 (ASMM…TGGF), 116–136 (LTWV…VTGY), and 186–206 (LHTF…FLMI). Residues histidine 187 and histidine 202 each contribute to the heme b site.

The protein belongs to the cytochrome b family. PetB subfamily. The 4 large subunits of the cytochrome b6-f complex are cytochrome b6, subunit IV (17 kDa polypeptide, PetD), cytochrome f and the Rieske protein, while the 4 small subunits are PetG, PetL, PetM and PetN. The complex functions as a dimer. Requires heme b as cofactor. Heme c is required as a cofactor.

The protein resides in the plastid. It is found in the chloroplast thylakoid membrane. Component of the cytochrome b6-f complex, which mediates electron transfer between photosystem II (PSII) and photosystem I (PSI), cyclic electron flow around PSI, and state transitions. The protein is Cytochrome b6 of Marchantia polymorpha (Common liverwort).